The primary structure comprises 180 residues: Adenine phosphoribosyltransferase (180 aa).

The residue at position 2 (serine 2) is an N-acetylserine. Phosphoserine occurs at positions 15 and 30. Tyrosine 60 is modified (phosphotyrosine). Position 66 is a phosphoserine (serine 66). Lysine 114 bears the N6-acetyllysine mark. Threonine 135 carries the phosphothreonine modification.

This sequence belongs to the purine/pyrimidine phosphoribosyltransferase family. Homodimer.

Its subcellular location is the cytoplasm. It catalyses the reaction AMP + diphosphate = 5-phospho-alpha-D-ribose 1-diphosphate + adenine. It participates in purine metabolism; AMP biosynthesis via salvage pathway; AMP from adenine: step 1/1. Its function is as follows. Catalyzes a salvage reaction resulting in the formation of AMP, that is energically less costly than de novo synthesis. The sequence is that of Adenine phosphoribosyltransferase from Stochomys longicaudatus (Target rat).